Reading from the N-terminus, the 382-residue chain is D-alanine--D-alanine ligase (382 aa).

In terms of domain architecture, ATP-grasp spans 161–372 (KVVFESAGLH…YAELIDELIH (212 aa)). Residue 193 to 248 (VDRLGFPVFVKPARAGSSMGISKVDSLEGLDAAIEEARRHDLKLVIEAGIVGREIE) coordinates ATP. The Mg(2+) site is built by Asp326, Glu339, and Asn341.

Belongs to the D-alanine--D-alanine ligase family. Requires Mg(2+) as cofactor. Mn(2+) serves as cofactor.

It is found in the cytoplasm. The enzyme catalyses 2 D-alanine + ATP = D-alanyl-D-alanine + ADP + phosphate + H(+). It participates in cell wall biogenesis; peptidoglycan biosynthesis. Its function is as follows. Cell wall formation. The protein is D-alanine--D-alanine ligase of Pseudarthrobacter chlorophenolicus (strain ATCC 700700 / DSM 12829 / CIP 107037 / JCM 12360 / KCTC 9906 / NCIMB 13794 / A6) (Arthrobacter chlorophenolicus).